A 478-amino-acid chain; its full sequence is Aspartyl/glutamyl-tRNA(Asn/Gln) amidotransferase subunit B (478 aa).

The protein belongs to the GatB/GatE family. GatB subfamily. As to quaternary structure, heterotrimer of A, B and C subunits.

The enzyme catalyses L-glutamyl-tRNA(Gln) + L-glutamine + ATP + H2O = L-glutaminyl-tRNA(Gln) + L-glutamate + ADP + phosphate + H(+). It carries out the reaction L-aspartyl-tRNA(Asn) + L-glutamine + ATP + H2O = L-asparaginyl-tRNA(Asn) + L-glutamate + ADP + phosphate + 2 H(+). In terms of biological role, allows the formation of correctly charged Asn-tRNA(Asn) or Gln-tRNA(Gln) through the transamidation of misacylated Asp-tRNA(Asn) or Glu-tRNA(Gln) in organisms which lack either or both of asparaginyl-tRNA or glutaminyl-tRNA synthetases. The reaction takes place in the presence of glutamine and ATP through an activated phospho-Asp-tRNA(Asn) or phospho-Glu-tRNA(Gln). The polypeptide is Aspartyl/glutamyl-tRNA(Asn/Gln) amidotransferase subunit B (Syntrophotalea carbinolica (strain DSM 2380 / NBRC 103641 / GraBd1) (Pelobacter carbinolicus)).